The chain runs to 126 residues: Large ribosomal subunit protein bL20 (126 aa).

It belongs to the bacterial ribosomal protein bL20 family.

Its function is as follows. Binds directly to 23S ribosomal RNA and is necessary for the in vitro assembly process of the 50S ribosomal subunit. It is not involved in the protein synthesizing functions of that subunit. This is Large ribosomal subunit protein bL20 from Acholeplasma laidlawii (strain PG-8A).